Reading from the N-terminus, the 877-residue chain is Phosphoenolpyruvate carboxylase (877 aa).

Residues histidine 137 and lysine 542 contribute to the active site.

This sequence belongs to the PEPCase type 1 family. Mg(2+) is required as a cofactor.

The enzyme catalyses oxaloacetate + phosphate = phosphoenolpyruvate + hydrogencarbonate. Its function is as follows. Forms oxaloacetate, a four-carbon dicarboxylic acid source for the tricarboxylic acid cycle. In Tolumonas auensis (strain DSM 9187 / NBRC 110442 / TA 4), this protein is Phosphoenolpyruvate carboxylase.